Consider the following 602-residue polypeptide: Elongation factor 4 (602 aa).

A tr-type G domain is found at 6–188 (DRIRNFCIIA…RIVTRIPPPG (183 aa)). GTP is bound by residues 18–23 (DHGKST) and 135–138 (NKID).

The protein belongs to the TRAFAC class translation factor GTPase superfamily. Classic translation factor GTPase family. LepA subfamily.

It localises to the cell membrane. It carries out the reaction GTP + H2O = GDP + phosphate + H(+). In terms of biological role, required for accurate and efficient protein synthesis under certain stress conditions. May act as a fidelity factor of the translation reaction, by catalyzing a one-codon backward translocation of tRNAs on improperly translocated ribosomes. Back-translocation proceeds from a post-translocation (POST) complex to a pre-translocation (PRE) complex, thus giving elongation factor G a second chance to translocate the tRNAs correctly. Binds to ribosomes in a GTP-dependent manner. This chain is Elongation factor 4, found in Pelotomaculum thermopropionicum (strain DSM 13744 / JCM 10971 / SI).